Consider the following 536-residue polypeptide: Bifunctional purine biosynthesis protein PurH (536 aa).

The MGS-like domain occupies 8-158; sequence IPAPDEVRIK…KNHAYVTVVT (151 aa).

This sequence belongs to the PurH family.

The catalysed reaction is (6R)-10-formyltetrahydrofolate + 5-amino-1-(5-phospho-beta-D-ribosyl)imidazole-4-carboxamide = 5-formamido-1-(5-phospho-D-ribosyl)imidazole-4-carboxamide + (6S)-5,6,7,8-tetrahydrofolate. It catalyses the reaction IMP + H2O = 5-formamido-1-(5-phospho-D-ribosyl)imidazole-4-carboxamide. It functions in the pathway purine metabolism; IMP biosynthesis via de novo pathway; 5-formamido-1-(5-phospho-D-ribosyl)imidazole-4-carboxamide from 5-amino-1-(5-phospho-D-ribosyl)imidazole-4-carboxamide (10-formyl THF route): step 1/1. It participates in purine metabolism; IMP biosynthesis via de novo pathway; IMP from 5-formamido-1-(5-phospho-D-ribosyl)imidazole-4-carboxamide: step 1/1. This Sinorhizobium medicae (strain WSM419) (Ensifer medicae) protein is Bifunctional purine biosynthesis protein PurH.